The sequence spans 337 residues: C5a anaphylatoxin chemotactic receptor 2 (337 aa).

Residues 1–38 (MGNDSVSYEYGDYSDLSDRPVDCLDGACLAIDPLRVAP) are Extracellular-facing. Asn-3 carries N-linked (GlcNAc...) asparagine glycosylation. Residues 39–61 (LPLYAAIFLVGVPGNAMVAWVAG) form a helical membrane-spanning segment. At 62–72 (KVARRRVGATW) the chain is on the cytoplasmic side. The chain crosses the membrane as a helical span at residues 73-95 (LLHLAVADLLCCLSLPILAVPIA). Residues 96–114 (RGGHWPYGAVGCRALPSII) lie on the Extracellular side of the membrane. A disulfide bridge links Cys-107 with Cys-186. A helical transmembrane segment spans residues 115-137 (LLTMYASVLLLAALSADLCFLAL). The Cytoplasmic segment spans residues 138–149 (GPAWWSTVQRAC). The helical transmembrane segment at 150–172 (GVQVACGAAWTLALLLTVPSAIY) threads the bilayer. Over 173 to 202 (RRLHQEHFPARLQCVVDYGGSSSTENAVTA) the chain is Extracellular. The chain crosses the membrane as a helical span at residues 203–225 (IRFLFGFLGPLVAVASCHSALLC). The Cytoplasmic segment spans residues 226–237 (WAARRCRPLGTA). The chain crosses the membrane as a helical span at residues 238–260 (IVVGFFVCWAPYHLLGLVLTVAA). The Extracellular segment spans residues 261–274 (PNSALLARALRAEP). The helical transmembrane segment at 275 to 294 (LIVGLALAHSCLNPMLFLYF) threads the bilayer. At 295-337 (GRAQLRRSLPAACHWALRESQGQDESVDSKKSTSHDLVSEMEV) the chain is on the cytoplasmic side. Ser-320 bears the Phosphoserine mark.

The protein belongs to the G-protein coupled receptor 1 family. Interacts with C3 (the anaphylatoxin peptide C3a and the adipogenic hormone ASP); the interaction occurs with higher affinity for ASP, enhancing the phosphorylation and activation of GPR77, recruitment of ARRB2 to the cell surface and endocytosis of GRP77. As to expression, frontal cortex, hippocampus, hypothalamus, pons and liver.

It is found in the cell membrane. Its function is as follows. Receptor for the chemotactic and inflammatory C3a, C4a and C5a anaphylatoxin peptides and also for their dearginated forms ASP/C3adesArg, C4adesArg and C5adesArg respectively. Couples weakly to G(i)-mediated signaling pathways. The protein is C5a anaphylatoxin chemotactic receptor 2 (C5AR2) of Homo sapiens (Human).